The chain runs to 294 residues: 3-methyl-2-oxobutanoate hydroxymethyltransferase 1 (294 aa).

D55 lines the Mg(2+) pocket. 3-methyl-2-oxobutanoate contacts are provided by residues 55–56 and K123; that span reads DS. E192 functions as the Proton acceptor in the catalytic mechanism.

It belongs to the PanB family. As to quaternary structure, homodecamer; pentamer of dimers. Mg(2+) serves as cofactor.

It localises to the cytoplasm. It catalyses the reaction 3-methyl-2-oxobutanoate + (6R)-5,10-methylene-5,6,7,8-tetrahydrofolate + H2O = 2-dehydropantoate + (6S)-5,6,7,8-tetrahydrofolate. Its pathway is cofactor biosynthesis; (R)-pantothenate biosynthesis; (R)-pantoate from 3-methyl-2-oxobutanoate: step 1/2. Catalyzes the reversible reaction in which hydroxymethyl group from 5,10-methylenetetrahydrofolate is transferred onto alpha-ketoisovalerate to form ketopantoate. This chain is 3-methyl-2-oxobutanoate hydroxymethyltransferase 1, found in Methylibium petroleiphilum (strain ATCC BAA-1232 / LMG 22953 / PM1).